The primary structure comprises 207 residues: Urease accessory protein UreG (207 aa).

12 to 19 (GPVGAGKT) is a binding site for GTP.

Belongs to the SIMIBI class G3E GTPase family. UreG subfamily. In terms of assembly, homodimer. UreD, UreF and UreG form a complex that acts as a GTP-hydrolysis-dependent molecular chaperone, activating the urease apoprotein by helping to assemble the nickel containing metallocenter of UreC. The UreE protein probably delivers the nickel.

It localises to the cytoplasm. Its function is as follows. Facilitates the functional incorporation of the urease nickel metallocenter. This process requires GTP hydrolysis, probably effectuated by UreG. In Cereibacter sphaeroides (strain ATCC 17025 / ATH 2.4.3) (Rhodobacter sphaeroides), this protein is Urease accessory protein UreG.